A 422-amino-acid polypeptide reads, in one-letter code: MSHYRAVKGTRDIFPDEVAAWQYVESVIHRVASFYAFHEIRTPVFEYTDLFQRSIGATTDIVGKEMFTFQPDPNGRSITLRPEMTAGVMRAFLQGNRASESPVHKLYYISNLFRKERPQAGRQRQFCQFGAELLGASSPAAVAEVIAMMMHVFRLLGLKGLKLRINTLGSIEDRKRYRDALREYLLPFSGELDAASLERLEKNPLRILDSKNPAVQSIVSGAPSLRDYLQPAAVEEFEEVLGYLDDRGIEYVQDPLLVRGLDYYCHTAFEVQCSDLGAQDALGGGGRYDGLARELGAGADLPAVGFAVGMERLMIALERQGLLSTIPPKGPDVYVVLQDRAFLVHAVALCGALRDAAISTEIDLAGRSMKAQMREANRIKAAYALFVGPDEVASGVYGLKNLESSSQESRSLEAVIAELGHG.

The protein belongs to the class-II aminoacyl-tRNA synthetase family. Homodimer.

The protein resides in the cytoplasm. The enzyme catalyses tRNA(His) + L-histidine + ATP = L-histidyl-tRNA(His) + AMP + diphosphate + H(+). This Prosthecochloris aestuarii (strain DSM 271 / SK 413) protein is Histidine--tRNA ligase.